We begin with the raw amino-acid sequence, 198 residues long: UPF0215 protein NEQ431 (198 aa).

The interval 179-198 is disordered; it reads TKGDSSKPRAGGDSNPGPAG.

The protein belongs to the UPF0215 family.

The polypeptide is UPF0215 protein NEQ431 (Nanoarchaeum equitans (strain Kin4-M)).